A 102-amino-acid chain; its full sequence is Malonate decarboxylase acyl carrier protein (102 aa).

S27 carries the O-(phosphoribosyl dephospho-coenzyme A)serine modification.

It belongs to the MdcC family. In terms of processing, covalently binds the prosthetic group of malonate decarboxylase.

It is found in the cytoplasm. In terms of biological role, subunit of malonate decarboxylase, it is an acyl carrier protein to which acetyl and malonyl thioester residues are bound via a 2'-(5''-phosphoribosyl)-3'-dephospho-CoA prosthetic group and turn over during the catalytic mechanism. This is Malonate decarboxylase acyl carrier protein from Acinetobacter calcoaceticus.